The primary structure comprises 397 residues: Elongation factor Tu (397 aa).

One can recognise a tr-type G domain in the interval 10–207; sequence KPHVNVGTVG…AIDAYVPDPV (198 aa). Residues 19–26 form a G1 region; it reads GHIDHGKT. Residue 19 to 26 coordinates GTP; the sequence is GHIDHGKT. T26 is a binding site for Mg(2+). The tract at residues 60–64 is G2; sequence GITIA. Positions 81–84 are G3; sequence DCPG. GTP contacts are provided by residues 81–85 and 136–139; these read DCPGH and NKVD. The interval 136–139 is G4; it reads NKVD. A G5 region spans residues 174-176; the sequence is SAL.

Belongs to the TRAFAC class translation factor GTPase superfamily. Classic translation factor GTPase family. EF-Tu/EF-1A subfamily. In terms of assembly, monomer.

The protein localises to the cytoplasm. It carries out the reaction GTP + H2O = GDP + phosphate + H(+). In terms of biological role, GTP hydrolase that promotes the GTP-dependent binding of aminoacyl-tRNA to the A-site of ribosomes during protein biosynthesis. This is Elongation factor Tu from Syntrophobacter fumaroxidans (strain DSM 10017 / MPOB).